The sequence spans 446 residues: ATP-dependent protease ATPase subunit HslU (446 aa).

Residues V18, 60–65, D259, E324, and R396 each bind ATP; that span reads GVGKTE.

It belongs to the ClpX chaperone family. HslU subfamily. A double ring-shaped homohexamer of HslV is capped on each side by a ring-shaped HslU homohexamer. The assembly of the HslU/HslV complex is dependent on binding of ATP.

The protein localises to the cytoplasm. ATPase subunit of a proteasome-like degradation complex; this subunit has chaperone activity. The binding of ATP and its subsequent hydrolysis by HslU are essential for unfolding of protein substrates subsequently hydrolyzed by HslV. HslU recognizes the N-terminal part of its protein substrates and unfolds these before they are guided to HslV for hydrolysis. This Dechloromonas aromatica (strain RCB) protein is ATP-dependent protease ATPase subunit HslU.